The following is a 425-amino-acid chain: Riboflavin biosynthesis protein RibBA (425 aa).

A DHBP synthase region spans residues 1–204 (MTRLDSVERA…IADLIEWRRK (204 aa)). Residues 28–29 (RE), Asp-33, 141–145 (RPGHT), and Glu-165 each bind D-ribulose 5-phosphate. Position 29 (Glu-29) interacts with Mg(2+). His-144 contacts Mg(2+). Residues 205-425 (HEKHIERVAE…HLPGEFGGAL (221 aa)) are GTP cyclohydrolase II. 259-263 (RVHSE) is a binding site for GTP. The Zn(2+) site is built by Cys-264, Cys-275, and Cys-277. Residues Gln-280, 303 to 305 (EGR), and Thr-325 each bind GTP. The Proton acceptor; for GTP cyclohydrolase activity role is filled by Asp-337. Arg-339 serves as the catalytic Nucleophile; for GTP cyclohydrolase activity. GTP contacts are provided by Thr-360 and Lys-365.

This sequence in the N-terminal section; belongs to the DHBP synthase family. The protein in the C-terminal section; belongs to the GTP cyclohydrolase II family. Requires Mg(2+) as cofactor. It depends on Mn(2+) as a cofactor. The cofactor is Zn(2+).

It carries out the reaction D-ribulose 5-phosphate = (2S)-2-hydroxy-3-oxobutyl phosphate + formate + H(+). The enzyme catalyses GTP + 4 H2O = 2,5-diamino-6-hydroxy-4-(5-phosphoribosylamino)-pyrimidine + formate + 2 phosphate + 3 H(+). Its pathway is cofactor biosynthesis; riboflavin biosynthesis; 2-hydroxy-3-oxobutyl phosphate from D-ribulose 5-phosphate: step 1/1. It functions in the pathway cofactor biosynthesis; riboflavin biosynthesis; 5-amino-6-(D-ribitylamino)uracil from GTP: step 1/4. Catalyzes the conversion of D-ribulose 5-phosphate to formate and 3,4-dihydroxy-2-butanone 4-phosphate. Its function is as follows. Catalyzes the conversion of GTP to 2,5-diamino-6-ribosylamino-4(3H)-pyrimidinone 5'-phosphate (DARP), formate and pyrophosphate. The protein is Riboflavin biosynthesis protein RibBA of Mycobacterium bovis (strain ATCC BAA-935 / AF2122/97).